Here is a 339-residue protein sequence, read N- to C-terminus: Fructose-1,6-bisphosphatase isozyme 2 (339 aa).

Residues 3-10 (DRSPFETD) are important for interaction with ALDOA. Residues Val-18 and 28–32 (TGELT) contribute to the AMP site. Residues Asp-69 and Glu-98 each contribute to the Mg(2+) site. 113–114 (KY) serves as a coordination point for AMP. Residues Asp-119, Leu-121, and Asp-122 each contribute to the Mg(2+) site. Asp-122 provides a ligand contact to substrate. Arg-141 is a binding site for AMP. A Nuclear localization signal motif is present at residues 204–208 (KKKGK). Residue 213 to 216 (NEGY) coordinates substrate. Residues Tyr-216 and Tyr-219 each carry the phosphotyrosine modification. Substrate is bound by residues 245–249 (YVGSM), Tyr-265, and Lys-275. Position 281 (Glu-281) interacts with Mg(2+).

It belongs to the FBPase class 1 family. Homotetramer. Interacts with ALDOA; the interaction blocks inhibition by physiological concentrations of AMP and reduces inhibition by Ca(2+). Interacts with alpha-actinin and F-actin. Mg(2+) serves as cofactor. In terms of tissue distribution, expressed in muscle, intestine, brain and placenta and very weakly in liver.

The protein resides in the cell junction. The protein localises to the cytoplasm. Its subcellular location is the nucleus. It localises to the myofibril. It is found in the sarcomere. The protein resides in the z line. The enzyme catalyses beta-D-fructose 1,6-bisphosphate + H2O = beta-D-fructose 6-phosphate + phosphate. It functions in the pathway carbohydrate biosynthesis; gluconeogenesis. Its activity is regulated as follows. Subject to complex allosteric regulation. The enzyme can assume an active R-state, or an inactive T-state. Intermediate conformations may exist. AMP acts as an allosteric inhibitor. Fructose 2,6-bisphosphate acts as a competitive inhibitor. Strongly inhibited by Ca(2+). Its function is as follows. Catalyzes the hydrolysis of fructose 1,6-bisphosphate to fructose 6-phosphate in the presence of divalent cations and probably participates in glycogen synthesis from carbohydrate precursors, such as lactate. The chain is Fructose-1,6-bisphosphatase isozyme 2 (Fbp2) from Mus musculus (Mouse).